The chain runs to 208 residues: Redox-sensing transcriptional repressor Rex (208 aa).

Residues 16–55 constitute a DNA-binding region (H-T-H motif); sequence LYYRCLSELNEKGEDKVSSAVLERLLKIDAATVRRDFSYF. Residue 90 to 95 participates in NAD(+) binding; it reads GVGNLG.

It belongs to the transcriptional regulatory Rex family. In terms of assembly, homodimer.

The protein resides in the cytoplasm. Its function is as follows. Modulates transcription in response to changes in cellular NADH/NAD(+) redox state. The chain is Redox-sensing transcriptional repressor Rex from Pediococcus pentosaceus (strain ATCC 25745 / CCUG 21536 / LMG 10740 / 183-1w).